An 866-amino-acid chain; its full sequence is DNA mismatch repair protein MutS (866 aa).

An ATP-binding site is contributed by 613–620 (GPNMGGKS).

This sequence belongs to the DNA mismatch repair MutS family.

Functionally, this protein is involved in the repair of mismatches in DNA. It is possible that it carries out the mismatch recognition step. This protein has a weak ATPase activity. This chain is DNA mismatch repair protein MutS, found in Haemophilus ducreyi (strain 35000HP / ATCC 700724).